Consider the following 920-residue polypeptide: Protein O-mannosyl-transferase TMTC3 (920 aa).

The Cytoplasmic portion of the chain corresponds to 1-14; the sequence is MLEGKMADINFKEV. Residues 15–35 traverse the membrane as a helical segment; sequence TLIVSVVAACYWNSLFCGFVF. Residues 36 to 94 lie on the Extracellular side of the membrane; it reads DDVSAILDNKDLHPSTPLKTLFQNDFWGTPMSEERSHKSYRPLTVLTFRLNYLLSELKP. The chain crosses the membrane as a helical span at residues 95–115; it reads MSYHLLNTVFHAVVSVIFLKV. Residues 116 to 125 lie on the Cytoplasmic side of the membrane; it reads CRLFLDKRSS. The next 2 membrane-spanning stretches (helical) occupy residues 126–144 and 145–163; these read MIAALLFAVHPIHTEAVTG and VVGRAELLSSVFFLAAFLS. The Cytoplasmic portion of the chain corresponds to 164–171; it reads YTKSKGPD. A helical transmembrane segment spans residues 172 to 192; that stretch reads NSIVWTPIVLTVFLVAVATLC. Residues 193–198 are Extracellular-facing; it reads KEQGIT. Residues 199-219 form a helical membrane-spanning segment; it reads VVGICCVYEVFVAQGYTLPML. Residues 220–236 lie on the Cytoplasmic side of the membrane; it reads CTVAGQFLRGKGSIPLS. Residues 237 to 257 form a helical membrane-spanning segment; that stretch reads MLQTLVKLIVLMLSTLLLVVV. Over 258–325 the chain is Extracellular; it reads RVQVIQSQLP…LIESFLDVRN (68 aa). A helical transmembrane segment spans residues 326-346; that stretch reads LATFAFFCFLGALGIFSLRYP. At 347–358 the chain is on the cytoplasmic side; it reads GDSSKTVLMALC. Residues 359–379 form a helical membrane-spanning segment; that stretch reads LMALPFIPASNLFFPVGFVVA. The Extracellular portion of the chain corresponds to 380–381; sequence ER. Residues 382–402 traverse the membrane as a helical segment; it reads VLYVPSMGFCILVAHGWQKIS. The Cytoplasmic portion of the chain corresponds to 403–409; that stretch reads NKSVLKK. Residues 410-428 traverse the membrane as a helical segment; that stretch reads LSWVCLSMVILTHALKTLH. Topologically, residues 429 to 920 are extracellular; the sequence is RNWDWESEYT…EEIERILNGE (492 aa). TPR repeat units follow at residues 451 to 484, 485 to 518, 534 to 567, 568 to 601, 602 to 635, 673 to 706, 707 to 740, 742 to 775, and 776 to 809; these read AKLWNNVGHALENEKNFEKALKYFLQATHVQPDD, IGAHMNVGRTYKNLNRSREAEASYMLAKSLMPQI, NVYINLANLIRANESRLEEADQLYRQAISMRPDF, KQAYISRGELLLKMNKPLKAKEAYLKALELDRNN, ADLWYNLAIVYIELKEPNEALKNFNRALELNPKH, ANGYFNLGMLAMDDKKDSEAESWMKKAIKLQPDF, RSALFNLALLYSQTAKELKALPILEELLKYYPDH, KGLILKGDILMNQKKDIPGAKKCFEKILEMDPSN, and VQGKHNLCVVYFEEKELLKAERCLVETLALAPHE. A glycan (N-linked (GlcNAc...) asparagine) is linked at N499. Y508 carries the phosphotyrosine modification. Residue N546 is glycosylated (N-linked (GlcNAc...) asparagine). Residues 829–897 are disordered; that stretch reads VEQPLAPADK…APHKTTKDIK (69 aa). The segment covering 840 to 858 has biased composition (basic and acidic residues); sequence PGTEEREEIPSEDVKEISS. Over residues 867–880 the composition is skewed to low complexity; the sequence is KTNNNRNSKSNKQS. The segment covering 887-897 has biased composition (basic and acidic residues); that stretch reads DAPHKTTKDIK.

It belongs to the TMTC family.

It is found in the membrane. The protein resides in the endoplasmic reticulum. It carries out the reaction a di-trans,poly-cis-dolichyl beta-D-mannosyl phosphate + L-seryl-[protein] = 3-O-(alpha-D-mannosyl)-L-seryl-[protein] + a di-trans,poly-cis-dolichyl phosphate + H(+). The enzyme catalyses a di-trans,poly-cis-dolichyl beta-D-mannosyl phosphate + L-threonyl-[protein] = 3-O-(alpha-D-mannosyl)-L-threonyl-[protein] + a di-trans,poly-cis-dolichyl phosphate + H(+). The protein operates within protein modification; protein glycosylation. In terms of biological role, transfers mannosyl residues to the hydroxyl group of serine or threonine residues. The 4 members of the TMTC family are O-mannosyl-transferases dedicated primarily to the cadherin superfamily, each member seems to have a distinct role in decorating the cadherin domains with O-linked mannose glycans at specific regions. Also acts as O-mannosyl-transferase on other proteins such as PDIA3. Involved in the positive regulation of proteasomal protein degradation in the endoplasmic reticulum (ER), and the control of ER stress response. This Mus musculus (Mouse) protein is Protein O-mannosyl-transferase TMTC3.